The sequence spans 352 residues: Putative [LysW]-L-2-aminoadipate/[LysW]-L-glutamate phosphate reductase (352 aa).

NADP(+) is bound by residues 10–13 (SGFT) and 34–36 (SRK). Cysteine 151 is an active-site residue. Position 319 (asparagine 319) interacts with NADP(+).

The protein belongs to the NAGSA dehydrogenase family. Type 1 subfamily. LysY sub-subfamily.

It localises to the cytoplasm. The enzyme catalyses [amino-group carrier protein]-C-terminal-N-(1-carboxy-5-oxopentan-1-yl)-L-glutamine + phosphate + NADP(+) = [amino-group carrier protein]-C-terminal-N-(1-carboxy-5-phosphooxy-5-oxopentan-1-yl)-L-glutamine + NADPH + H(+). The catalysed reaction is [amino-group carrier protein]-C-terminal-gamma-(L-glutamyl-5-semialdehyde)-L-glutamate + phosphate + NADP(+) = [amino-group carrier protein]-C-terminal-gamma-(5-phospho-L-glutamyl)-L-glutamate + NADPH + H(+). The protein operates within amino-acid biosynthesis; L-lysine biosynthesis via AAA pathway; L-lysine from L-alpha-aminoadipate (Thermus route): step 3/5. Its pathway is amino-acid biosynthesis; L-arginine biosynthesis. Functionally, involved in both the arginine and lysine biosynthetic pathways. The polypeptide is Putative [LysW]-L-2-aminoadipate/[LysW]-L-glutamate phosphate reductase (Pyrobaculum neutrophilum (strain DSM 2338 / JCM 9278 / NBRC 100436 / V24Sta) (Thermoproteus neutrophilus)).